The following is a 525-amino-acid chain: Nucleolar complex protein 4 homolog (525 aa).

3 helical membrane-spanning segments follow: residues 305 to 325 (AAYD…FVPI), 356 to 376 (FFHL…LVAA), and 384 to 404 (LSLT…CNLI).

It belongs to the CBF/MAK21 family.

Its subcellular location is the nucleus membrane. It localises to the nucleus. The protein localises to the nucleolus. This Danio rerio (Zebrafish) protein is Nucleolar complex protein 4 homolog (noc4l).